A 209-amino-acid polypeptide reads, in one-letter code: uncharacterized protein (209 aa).

The segment at 177-209 (DNSDNSSDSDDSDSLDGSDDLNDSDNVDNLFVG) is disordered. The span at 183–202 (SDSDDSDSLDGSDDLNDSDN) shows a compositional bias: acidic residues.

This is an uncharacterized protein from Acanthamoeba polyphaga (Amoeba).